The following is a 300-amino-acid chain: ATP-dependent (S)-NAD(P)H-hydrate dehydratase (300 aa).

The region spanning 14–293 (LLTLFKTIVP…NEISAVFRSD (280 aa)) is the YjeF C-terminal domain. (6S)-NADPHX-binding positions include G114 and 167–173 (NAMEFRR). Residues 198-202 (KGVND) and 219-228 (GSGRRCGGQG) each bind ATP. D229 lines the (6S)-NADPHX pocket.

It belongs to the NnrD/CARKD family. Requires Mg(2+) as cofactor.

The enzyme catalyses (6S)-NADHX + ATP = ADP + phosphate + NADH + H(+). It catalyses the reaction (6S)-NADPHX + ATP = ADP + phosphate + NADPH + H(+). Functionally, catalyzes the dehydration of the S-form of NAD(P)HX at the expense of ATP, which is converted to ADP. Together with NAD(P)HX epimerase, which catalyzes the epimerization of the S- and R-forms, the enzyme allows the repair of both epimers of NAD(P)HX, a damaged form of NAD(P)H that is a result of enzymatic or heat-dependent hydration. In Drosophila pseudoobscura pseudoobscura (Fruit fly), this protein is ATP-dependent (S)-NAD(P)H-hydrate dehydratase.